The following is a 201-amino-acid chain: Small ribosomal subunit protein uS4c (201 aa).

Residues 20–43 (GLTNKRPKSRNDPTNQSSSRKISQ) form a disordered region. Residues 31–41 (DPTNQSSSRKI) are compositionally biased toward polar residues. One can recognise an S4 RNA-binding domain in the interval 89–157 (MRLDNIIFRL…IGKNLDLSQK (69 aa)).

This sequence belongs to the universal ribosomal protein uS4 family. In terms of assembly, part of the 30S ribosomal subunit. Contacts protein S5. The interaction surface between S4 and S5 is involved in control of translational fidelity.

It localises to the plastid. Its subcellular location is the chloroplast. Functionally, one of the primary rRNA binding proteins, it binds directly to 16S rRNA where it nucleates assembly of the body of the 30S subunit. Its function is as follows. With S5 and S12 plays an important role in translational accuracy. This chain is Small ribosomal subunit protein uS4c (rps4), found in Cycas taitungensis (Prince sago).